The primary structure comprises 429 residues: Glutamate-1-semialdehyde 2,1-aminomutase (429 aa).

An N6-(pyridoxal phosphate)lysine modification is found at Lys265.

This sequence belongs to the class-III pyridoxal-phosphate-dependent aminotransferase family. HemL subfamily. Homodimer. Pyridoxal 5'-phosphate is required as a cofactor.

It is found in the cytoplasm. It carries out the reaction (S)-4-amino-5-oxopentanoate = 5-aminolevulinate. It functions in the pathway porphyrin-containing compound metabolism; protoporphyrin-IX biosynthesis; 5-aminolevulinate from L-glutamyl-tRNA(Glu): step 2/2. In Azotobacter vinelandii (strain DJ / ATCC BAA-1303), this protein is Glutamate-1-semialdehyde 2,1-aminomutase.